Here is a 161-residue protein sequence, read N- to C-terminus: Thy-1 membrane glycoprotein (161 aa).

An N-terminal signal peptide occupies residues 1-19 (MNLAISIALLLTVLQVSRG). Pyrrolidone carboxylic acid is present on Gln-20. An Ig-like V-type domain is found at 20–126 (QKVTSLTACL…SQNVTVLRDK (107 aa)). Intrachain disulfides connect Cys-28-Cys-130 and Cys-38-Cys-104. N-linked (GlcNAc...) asparagine glycans are attached at residues Asn-42 and Asn-79. Ser-82 bears the Phosphoserine mark. N-linked (GlcNAc...) asparagine glycosylation occurs at Asn-119. A lipid anchor (GPI-anchor amidated cysteine; alternate) is attached at Cys-130. Residues 131 to 161 (EGISLLAQNTSWLXLLLLSLSLLQATDFMSL) constitute a propeptide, removed in mature form. Asn-139 carries an N-linked (GlcNAc...) asparagine glycan.

It localises to the cell membrane. May play a role in cell-cell or cell-ligand interactions during synaptogenesis and other events in the brain. This chain is Thy-1 membrane glycoprotein (THY1), found in Macaca mulatta (Rhesus macaque).